Reading from the N-terminus, the 432-residue chain is Glutamyl-tRNA reductase (432 aa).

Substrate contacts are provided by residues 55–58, Ser-114, 119–121, and Gln-125; these read TCNR and ETQ. Catalysis depends on Cys-56, which acts as the Nucleophile. 194–199 provides a ligand contact to NADP(+); that stretch reads GAGEMI.

Belongs to the glutamyl-tRNA reductase family. In terms of assembly, homodimer.

It carries out the reaction (S)-4-amino-5-oxopentanoate + tRNA(Glu) + NADP(+) = L-glutamyl-tRNA(Glu) + NADPH + H(+). Its pathway is porphyrin-containing compound metabolism; protoporphyrin-IX biosynthesis; 5-aminolevulinate from L-glutamyl-tRNA(Glu): step 1/2. Functionally, catalyzes the NADPH-dependent reduction of glutamyl-tRNA(Glu) to glutamate 1-semialdehyde (GSA). In Burkholderia pseudomallei (strain 1710b), this protein is Glutamyl-tRNA reductase.